Reading from the N-terminus, the 602-residue chain is uncharacterized protein (602 aa).

N-linked (GlcNAc...) asparagine glycans are attached at residues Asn305, Asn497, and Asn577.

Post-translationally, N-glycosylated.

The protein localises to the vacuole. This is an uncharacterized protein from Saccharomyces cerevisiae (strain ATCC 204508 / S288c) (Baker's yeast).